Here is a 314-residue protein sequence, read N- to C-terminus: tRNA dimethylallyltransferase (314 aa).

40 to 47 (GPTASGKS) contacts ATP. 42–47 (TASGKS) lines the substrate pocket.

It belongs to the IPP transferase family. Monomer. Mg(2+) is required as a cofactor.

The catalysed reaction is adenosine(37) in tRNA + dimethylallyl diphosphate = N(6)-dimethylallyladenosine(37) in tRNA + diphosphate. Its function is as follows. Catalyzes the transfer of a dimethylallyl group onto the adenine at position 37 in tRNAs that read codons beginning with uridine, leading to the formation of N6-(dimethylallyl)adenosine (i(6)A). In Cereibacter sphaeroides (strain KD131 / KCTC 12085) (Rhodobacter sphaeroides), this protein is tRNA dimethylallyltransferase.